A 323-amino-acid chain; its full sequence is Cyclin-H (323 aa).

The residue at position 5 (S5) is a Phosphoserine; by CDK8. A Phosphoserine modification is found at S132. Residues 296–323 (GYEDDDYVSKKPKQEEEEWTDDDLVDAL) form a disordered region. S304 bears the Phosphoserine; by CDK8 mark. A compositionally biased stretch (acidic residues) spans 310 to 323 (EEEEWTDDDLVDAL). T315 carries the phosphothreonine modification.

The protein belongs to the cyclin family. Cyclin C subfamily. Associates primarily with CDK7 and MAT1 to form the CAK complex. CAK can further associate with the core-TFIIH to form the TFIIH basal transcription factor.

The protein resides in the nucleus. In terms of biological role, regulates CDK7, the catalytic subunit of the CDK-activating kinase (CAK) enzymatic complex. CAK activates the cyclin-associated kinases CDK1, CDK2, CDK4 and CDK6 by threonine phosphorylation. CAK complexed to the core-TFIIH basal transcription factor activates RNA polymerase II by serine phosphorylation of the repetitive C-terminal domain (CTD) of its large subunit (POLR2A), allowing its escape from the promoter and elongation of the transcripts. Involved in cell cycle control and in RNA transcription by RNA polymerase II. Its expression and activity are constant throughout the cell cycle. In Rattus norvegicus (Rat), this protein is Cyclin-H (Ccnh).